We begin with the raw amino-acid sequence, 66 residues long: U10-theraphotoxin-Cg1a 2 (66 aa).

Positions 1–21 (MKTSVLFVIFGLALLLCLSFA) are cleaved as a signal peptide. The propeptide occupies 22–29 (AELEDTGR). Cystine bridges form between C31–C46, C38–C51, and C45–C58.

It belongs to the neurotoxin 10 (Hwtx-1) family. 29 (Jztx-13) subfamily. As to expression, expressed by the venom gland.

Its subcellular location is the secreted. In terms of biological role, probable ion channel inhibitor. This chain is U10-theraphotoxin-Cg1a 2, found in Chilobrachys guangxiensis (Chinese earth tiger tarantula).